The primary structure comprises 160 residues: Ribonuclease H (160 aa).

The 142-residue stretch at 5–146 (PGGLVEIWTD…VDQLATAARE (142 aa)) folds into the RNase H type-1 domain. Mg(2+) is bound by residues D14, E52, D74, and D138.

The protein belongs to the RNase H family. As to quaternary structure, monomer. Requires Mg(2+) as cofactor.

It localises to the cytoplasm. The enzyme catalyses Endonucleolytic cleavage to 5'-phosphomonoester.. Its function is as follows. Endonuclease that specifically degrades the RNA of RNA-DNA hybrids. This is Ribonuclease H from Acidiphilium cryptum (strain JF-5).